A 263-amino-acid polypeptide reads, in one-letter code: Tryptophan synthase alpha chain (263 aa).

Catalysis depends on proton acceptor residues Glu-49 and Asp-60.

This sequence belongs to the TrpA family. As to quaternary structure, tetramer of two alpha and two beta chains.

The enzyme catalyses (1S,2R)-1-C-(indol-3-yl)glycerol 3-phosphate + L-serine = D-glyceraldehyde 3-phosphate + L-tryptophan + H2O. It functions in the pathway amino-acid biosynthesis; L-tryptophan biosynthesis; L-tryptophan from chorismate: step 5/5. Its function is as follows. The alpha subunit is responsible for the aldol cleavage of indoleglycerol phosphate to indole and glyceraldehyde 3-phosphate. The protein is Tryptophan synthase alpha chain of Jannaschia sp. (strain CCS1).